A 254-amino-acid polypeptide reads, in one-letter code: Large ribosomal subunit protein uL2 (254 aa).

The protein belongs to the universal ribosomal protein uL2 family.

This Candida glabrata (strain ATCC 2001 / BCRC 20586 / JCM 3761 / NBRC 0622 / NRRL Y-65 / CBS 138) (Yeast) protein is Large ribosomal subunit protein uL2 (RPL2).